Reading from the N-terminus, the 503-residue chain is Maturase K (503 aa).

It belongs to the intron maturase 2 family. MatK subfamily.

The protein resides in the plastid. It is found in the chloroplast. Usually encoded in the trnK tRNA gene intron. Probably assists in splicing its own and other chloroplast group II introns. In Rosa gigantea (Giant tea rose), this protein is Maturase K.